The following is a 105-amino-acid chain: Nitrogen fixation nifHD region GlnB-like protein 1 (105 aa).

It belongs to the P(II) protein family.

Functionally, could be involved in the regulation of nitrogen fixation. The polypeptide is Nitrogen fixation nifHD region GlnB-like protein 1 (glnBA) (Methanobacterium ivanovii).